The sequence spans 539 residues: Inosine-5'-monophosphate dehydrogenase (539 aa).

CBS domains lie at 140 to 196 and 200 to 257; these read IIVN…DMPI and MTRE…PRAC. NAD(+) is bound by residues Asp292 and 343–345; that span reads GIG. K(+) contacts are provided by Gly345 and Gly347. Ser348 provides a ligand contact to IMP. Cys350 serves as a coordination point for K(+). The active-site Thioimidate intermediate is Cys350. IMP contacts are provided by residues 383–385, 406–407, and 430–434; these read DGG, GS, and YRGMG. The active-site Proton acceptor is the Arg446. Residue Glu460 coordinates IMP. Residues Glu514 and His516 each coordinate K(+). Residues 517–539 form a disordered region; sequence PHDIAITQEAPNYSPDVHSGDAG.

It belongs to the IMPDH/GMPR family. As to quaternary structure, homotetramer. The cofactor is K(+).

The enzyme catalyses IMP + NAD(+) + H2O = XMP + NADH + H(+). It participates in purine metabolism; XMP biosynthesis via de novo pathway; XMP from IMP: step 1/1. Mycophenolic acid (MPA) is a non-competitive inhibitor that prevents formation of the closed enzyme conformation by binding to the same site as the amobile flap. In contrast, mizoribine monophosphate (MZP) is a competitive inhibitor that induces the closed conformation. MPA is a potent inhibitor of mammalian IMPDHs but a poor inhibitor of the bacterial enzymes. MZP is a more potent inhibitor of bacterial IMPDH. Catalyzes the conversion of inosine 5'-phosphate (IMP) to xanthosine 5'-phosphate (XMP), the first committed and rate-limiting step in the de novo synthesis of guanine nucleotides, and therefore plays an important role in the regulation of cell growth. The polypeptide is Inosine-5'-monophosphate dehydrogenase (Rhodopirellula baltica (strain DSM 10527 / NCIMB 13988 / SH1)).